Here is a 609-residue protein sequence, read N- to C-terminus: Glutamine--fructose-6-phosphate aminotransferase [isomerizing] (609 aa).

Cys2 serves as the catalytic Nucleophile; for GATase activity. The region spanning 2 to 219 is the Glutamine amidotransferase type-2 domain; that stretch reads CGIFGYLGSK…SGELAIVGLG (218 aa). 2 consecutive SIS domains span residues 280–426 and 458–599; these read ISEK…SKHT and WAHT…IDCP. The active-site For Fru-6P isomerization activity is Lys604.

In terms of assembly, homodimer.

The protein localises to the cytoplasm. The catalysed reaction is D-fructose 6-phosphate + L-glutamine = D-glucosamine 6-phosphate + L-glutamate. Catalyzes the first step in hexosamine metabolism, converting fructose-6P into glucosamine-6P using glutamine as a nitrogen source. The chain is Glutamine--fructose-6-phosphate aminotransferase [isomerizing] from Chlamydia abortus (strain DSM 27085 / S26/3) (Chlamydophila abortus).